Consider the following 36-residue polypeptide: Photosystem I reaction center subunit VIII (36 aa).

A helical membrane pass occupies residues 1–21 (MITFSFPSIFVPLVGLVFPAI).

Belongs to the PsaI family.

The protein resides in the plastid. It localises to the chloroplast thylakoid membrane. In terms of biological role, may help in the organization of the PsaL subunit. This chain is Photosystem I reaction center subunit VIII, found in Coffea arabica (Arabian coffee).